The primary structure comprises 508 residues: MGLPWYRVHTVVLNDPGRLLAVHIMHTALVSGWAGSMALYELAVFDPSDPVLDPMWRQGMFVIPFMTRLGITNSWGGWSITGGTVTNPGIWSYEGVAGAHIVFSGLCFLAAIWHWVYWDLEIFRDERTGKPSLDLPKIFGIHLFLSGLACFGFGAFHVTGLYGPGIWVSDPYGLTGKVQSVSPAWGVEGFDPFVPGGIASHHIAAGTLGILAGLFHLSVRPPQRLYKGLRMGNIETVLSSSIAAVFFAAFVVAGTMWYGSATTPIELFGPTRYQWDQGYFQQEIYRRVGAGLAENQSLAEAWSKIPEKLAFYDYIGNNPAKGGLFRAGSMDNGDGIAVGWLGHPIFRDKEGRELFVRRMPTFFETFPVVLVDGDGIVRADVPFRRAESKYSVEQVGVTVEFYGGELNGVSYSDPATVKKYARRAQLGEIFELDRATLKSDGVFRSSPRGWFTFGHASFALLFFFGHIWHGARTLFRDVFAGIDPDLDAQVEFGAFQKLGDPTTKRQVV.

6 consecutive transmembrane segments (helical) span residues 21–36 (AVHI…WAGS), 101–115 (IVFS…IWHW), 140–156 (GIHL…FGAF), 203–218 (IAAG…FHLS), 237–252 (VLSS…AFVV), and 457–472 (SFAL…HGAR).

It belongs to the PsbB/PsbC family. PsbB subfamily. In terms of assembly, PSII is composed of 1 copy each of membrane proteins PsbA, PsbB, PsbC, PsbD, PsbE, PsbF, PsbH, PsbI, PsbJ, PsbK, PsbL, PsbM, PsbT, PsbX, PsbY, PsbZ, Psb30/Ycf12, at least 3 peripheral proteins of the oxygen-evolving complex and a large number of cofactors. It forms dimeric complexes. Requires Binds multiple chlorophylls. PSII binds additional chlorophylls, carotenoids and specific lipids. as cofactor.

The protein resides in the plastid. Its subcellular location is the chloroplast thylakoid membrane. One of the components of the core complex of photosystem II (PSII). It binds chlorophyll and helps catalyze the primary light-induced photochemical processes of PSII. PSII is a light-driven water:plastoquinone oxidoreductase, using light energy to abstract electrons from H(2)O, generating O(2) and a proton gradient subsequently used for ATP formation. The chain is Photosystem II CP47 reaction center protein from Nandina domestica (Heavenly bamboo).